Reading from the N-terminus, the 214-residue chain is Adenylate kinase (214 aa).

ATP is bound at residue 10 to 15 (GAGKGT). Positions 30 to 59 (STGDMFRAAIKAGTELGKQAKALMDEGKLV) are NMP. Residues threonine 31, arginine 36, 57 to 59 (KLV), 85 to 88 (GFPR), and glutamine 92 contribute to the AMP site. Residues 122 to 159 (GRRVHQASGRSYHIVYNPPKVEGKDDVTGEDLIIRADD) form an LID region. ATP is bound by residues arginine 123 and 132–133 (SY). The AMP site is built by arginine 156 and arginine 167. An ATP-binding site is contributed by glutamine 200.

This sequence belongs to the adenylate kinase family. As to quaternary structure, monomer.

Its subcellular location is the cytoplasm. It carries out the reaction AMP + ATP = 2 ADP. Its pathway is purine metabolism; AMP biosynthesis via salvage pathway; AMP from ADP: step 1/1. Functionally, catalyzes the reversible transfer of the terminal phosphate group between ATP and AMP. Plays an important role in cellular energy homeostasis and in adenine nucleotide metabolism. It may be linked to the biosynthesis of lipopolysaccharide surface molecules, which are important for the pathogenesis of H.influenzae. The protein is Adenylate kinase of Haemophilus influenzae (strain ATCC 51907 / DSM 11121 / KW20 / Rd).